The sequence spans 268 residues: Tryptophan synthase alpha chain (268 aa).

Active-site proton acceptor residues include Glu49 and Asp60.

It belongs to the TrpA family. Tetramer of two alpha and two beta chains.

It catalyses the reaction (1S,2R)-1-C-(indol-3-yl)glycerol 3-phosphate + L-serine = D-glyceraldehyde 3-phosphate + L-tryptophan + H2O. Its pathway is amino-acid biosynthesis; L-tryptophan biosynthesis; L-tryptophan from chorismate: step 5/5. The alpha subunit is responsible for the aldol cleavage of indoleglycerol phosphate to indole and glyceraldehyde 3-phosphate. The sequence is that of Tryptophan synthase alpha chain from Aliivibrio fischeri (strain MJ11) (Vibrio fischeri).